Reading from the N-terminus, the 106-residue chain is ATP-dependent Clp protease adapter protein ClpS (106 aa).

Positions 1–22 are disordered; it reads MNEYHNSLKSKESVKDERQQKL. Residues 9-20 show a composition bias toward basic and acidic residues; sequence KSKESVKDERQQ.

Belongs to the ClpS family. Binds to the N-terminal domain of the chaperone ClpA.

Involved in the modulation of the specificity of the ClpAP-mediated ATP-dependent protein degradation. The sequence is that of ATP-dependent Clp protease adapter protein ClpS from Photorhabdus laumondii subsp. laumondii (strain DSM 15139 / CIP 105565 / TT01) (Photorhabdus luminescens subsp. laumondii).